The sequence spans 566 residues: Proline--tRNA ligase (566 aa).

The protein belongs to the class-II aminoacyl-tRNA synthetase family. ProS type 1 subfamily. As to quaternary structure, homodimer.

The protein localises to the cytoplasm. The catalysed reaction is tRNA(Pro) + L-proline + ATP = L-prolyl-tRNA(Pro) + AMP + diphosphate. Catalyzes the attachment of proline to tRNA(Pro) in a two-step reaction: proline is first activated by ATP to form Pro-AMP and then transferred to the acceptor end of tRNA(Pro). As ProRS can inadvertently accommodate and process non-cognate amino acids such as alanine and cysteine, to avoid such errors it has two additional distinct editing activities against alanine. One activity is designated as 'pretransfer' editing and involves the tRNA(Pro)-independent hydrolysis of activated Ala-AMP. The other activity is designated 'posttransfer' editing and involves deacylation of mischarged Ala-tRNA(Pro). The misacylated Cys-tRNA(Pro) is not edited by ProRS. The protein is Proline--tRNA ligase of Staphylococcus saprophyticus subsp. saprophyticus (strain ATCC 15305 / DSM 20229 / NCIMB 8711 / NCTC 7292 / S-41).